A 764-amino-acid polypeptide reads, in one-letter code: 5-methyltetrahydropteroyltriglutamate--homocysteine methyltransferase (764 aa).

Residues 16 to 19 (RELK) and K115 each bind 5-methyltetrahydropteroyltri-L-glutamate. L-homocysteine-binding positions include 435–437 (IGS) and E488. Residues 435 to 437 (IGS) and E488 each bind L-methionine. 5-methyltetrahydropteroyltri-L-glutamate-binding positions include 519–520 (RC) and W565. D603 contributes to the L-homocysteine binding site. D603 contributes to the L-methionine binding site. Residue E609 participates in 5-methyltetrahydropteroyltri-L-glutamate binding. 3 residues coordinate Zn(2+): H645, C647, and E669. H698 functions as the Proton donor in the catalytic mechanism. Position 730 (C730) interacts with Zn(2+).

Belongs to the vitamin-B12 independent methionine synthase family. Requires Zn(2+) as cofactor.

It catalyses the reaction 5-methyltetrahydropteroyltri-L-glutamate + L-homocysteine = tetrahydropteroyltri-L-glutamate + L-methionine. It participates in amino-acid biosynthesis; L-methionine biosynthesis via de novo pathway; L-methionine from L-homocysteine (MetE route): step 1/1. Functionally, catalyzes the transfer of a methyl group from 5-methyltetrahydrofolate to homocysteine resulting in methionine formation. The polypeptide is 5-methyltetrahydropteroyltriglutamate--homocysteine methyltransferase (Burkholderia pseudomallei (strain K96243)).